The following is a 408-amino-acid chain: Probable 2,3-bisphosphoglycerate-independent phosphoglycerate mutase (408 aa).

The protein belongs to the BPG-independent phosphoglycerate mutase family. A-PGAM subfamily.

The enzyme catalyses (2R)-2-phosphoglycerate = (2R)-3-phosphoglycerate. The protein operates within carbohydrate degradation; glycolysis; pyruvate from D-glyceraldehyde 3-phosphate: step 3/5. Its function is as follows. Catalyzes the interconversion of 2-phosphoglycerate and 3-phosphoglycerate. This Deinococcus geothermalis (strain DSM 11300 / CIP 105573 / AG-3a) protein is Probable 2,3-bisphosphoglycerate-independent phosphoglycerate mutase.